We begin with the raw amino-acid sequence, 62 residues long: Photosystem II reaction center protein Z (62 aa).

Helical transmembrane passes span 8 to 28 (ALLLLVVMSFVLIVGVPVLYA) and 41 to 61 (LVGGLAWTALVVLVGVLNYFV).

This sequence belongs to the PsbZ family. PSII is composed of 1 copy each of membrane proteins PsbA, PsbB, PsbC, PsbD, PsbE, PsbF, PsbH, PsbI, PsbJ, PsbK, PsbL, PsbM, PsbT, PsbX, PsbY, PsbZ, Psb30/Ycf12, peripheral proteins PsbO, CyanoQ (PsbQ), PsbU, PsbV and a large number of cofactors. It forms dimeric complexes.

It is found in the cellular thylakoid membrane. In terms of biological role, may control the interaction of photosystem II (PSII) cores with the light-harvesting antenna, regulates electron flow through the 2 photosystem reaction centers. PSII is a light-driven water plastoquinone oxidoreductase, using light energy to abstract electrons from H(2)O, generating a proton gradient subsequently used for ATP formation. The sequence is that of Photosystem II reaction center protein Z from Synechococcus elongatus (strain ATCC 33912 / PCC 7942 / FACHB-805) (Anacystis nidulans R2).